The chain runs to 50 residues: Protein hunchback (50 aa).

3 consecutive C2H2-type zinc fingers follow at residues 1–5 (HIRNH), 11–33 (FKCNKCSYSCVNKSMLNSHLKSH), and 39–50 (YRCADCAYATKY).

The protein belongs to the hunchback C2H2-type zinc-finger protein family.

The protein localises to the nucleus. Gap class segmentation protein that controls development of head structures. In Schultesia lampyridiformis (Firefly mimic roach), this protein is Protein hunchback (hb).